The primary structure comprises 145 residues: Ribosomal RNA large subunit methyltransferase H (145 aa).

Residues Leu68, Gly95, and 113 to 118 (FSKMTF) contribute to the S-adenosyl-L-methionine site.

It belongs to the RNA methyltransferase RlmH family. Homodimer.

The protein localises to the cytoplasm. It catalyses the reaction pseudouridine(1915) in 23S rRNA + S-adenosyl-L-methionine = N(3)-methylpseudouridine(1915) in 23S rRNA + S-adenosyl-L-homocysteine + H(+). Specifically methylates the pseudouridine at position 1915 (m3Psi1915) in 23S rRNA. The sequence is that of Ribosomal RNA large subunit methyltransferase H from Mycoplasmopsis pulmonis (strain UAB CTIP) (Mycoplasma pulmonis).